The following is a 240-amino-acid chain: Adenosine 5'-phosphosulfate reductase (240 aa).

Residues Cys125, Cys126, Cys208, and Cys211 each contribute to the [4Fe-4S] cluster site. The active-site Nucleophile; cysteine thiosulfonate intermediate is the Cys234.

The protein belongs to the PAPS reductase family. CysH subfamily. [4Fe-4S] cluster is required as a cofactor.

The protein resides in the cytoplasm. It catalyses the reaction [thioredoxin]-disulfide + sulfite + AMP + 2 H(+) = adenosine 5'-phosphosulfate + [thioredoxin]-dithiol. The protein operates within sulfur metabolism; hydrogen sulfide biosynthesis; sulfite from sulfate. Catalyzes the formation of sulfite from adenosine 5'-phosphosulfate (APS) using thioredoxin as an electron donor. This Oceanobacillus iheyensis (strain DSM 14371 / CIP 107618 / JCM 11309 / KCTC 3954 / HTE831) protein is Adenosine 5'-phosphosulfate reductase.